The chain runs to 236 residues: tRNA (guanine-N(7)-)-methyltransferase (236 aa).

S-adenosyl-L-methionine contacts are provided by residues Gly-54, 77–78 (EI), 110–111 (NA), and Leu-130. Asp-133 is a catalytic residue. 208–210 (TEE) lines the S-adenosyl-L-methionine pocket.

Belongs to the class I-like SAM-binding methyltransferase superfamily. TrmB family.

The protein resides in the nucleus. It catalyses the reaction guanosine(46) in tRNA + S-adenosyl-L-methionine = N(7)-methylguanosine(46) in tRNA + S-adenosyl-L-homocysteine. It functions in the pathway tRNA modification; N(7)-methylguanine-tRNA biosynthesis. Its function is as follows. Catalyzes the formation of N(7)-methylguanine at position 46 (m7G46) in tRNA. The protein is tRNA (guanine-N(7)-)-methyltransferase of Bombyx mori (Silk moth).